A 683-amino-acid polypeptide reads, in one-letter code: Translation factor guf1, mitochondrial (683 aa).

A mitochondrion-targeting transit peptide spans 1 to 43; sequence MRGCLQLARWLSAAPKGTAASLTRAPFVLANAPRYFTSSASRA. In terms of domain architecture, tr-type G spans 66-250; that stretch reads ERYRNFCIVA…KIPAYGHFPV (185 aa). GTP is bound by residues 75–82, 139–143, and 193–196; these read AHVDHGKS, DTPGH, and NKVD.

It belongs to the TRAFAC class translation factor GTPase superfamily. Classic translation factor GTPase family. LepA subfamily.

It is found in the mitochondrion inner membrane. It carries out the reaction GTP + H2O = GDP + phosphate + H(+). Functionally, promotes mitochondrial protein synthesis. May act as a fidelity factor of the translation reaction, by catalyzing a one-codon backward translocation of tRNAs on improperly translocated ribosomes. Binds to mitochondrial ribosomes in a GTP-dependent manner. The sequence is that of Translation factor guf1, mitochondrial (guf1) from Aspergillus fumigatus (strain ATCC MYA-4609 / CBS 101355 / FGSC A1100 / Af293) (Neosartorya fumigata).